The primary structure comprises 139 residues: uncharacterized protein (139 aa).

It is found in the mitochondrion. This is an uncharacterized protein from Marchantia polymorpha (Common liverwort).